The following is a 935-amino-acid chain: Protocadherin gamma-A11 (935 aa).

A signal peptide spans 1–29; sequence MANRLQRGDRSRLLLLLCIFLGTLRGFRA. Cadherin domains are found at residues 30–134, 135–243, 244–348, 349–453, 454–563, and 571–677; these read RQIR…APSF, QEDE…IPMF, TQSV…APEI, TITS…PPVF, PHSS…APEI, and DGST…ADLG. Residues 30 to 693 lie on the Extracellular side of the membrane; the sequence is RQIRYSVPEE…NSEASDLSLY (664 aa). Asn-48 is a glycosylation site (N-linked (GlcNAc...) asparagine). Asn-255, Asn-266, Asn-420, and Asn-546 each carry an N-linked (GlcNAc...) asparagine glycan. Residues 694 to 714 form a helical membrane-spanning segment; sequence LVVAVAAVSCIFLVFVIVLLA. At 715–935 the chain is on the cytoplasmic side; it reads LRLWRWHKSR…KKKSGKKEKK (221 aa). Disordered stretches follow at residues 805 to 844 and 905 to 935; these read CDPT…WPNN and ATLT…KEKK. Residues 807–844 are compositionally biased toward polar residues; the sequence is PTSNQQAPPNTDWRFSQAQRPGTSGSQNGDDTGTWPNN. Residues 925 to 935 show a composition bias toward basic residues; that stretch reads NKKKSGKKEKK.

The protein resides in the cell membrane. Functionally, potential calcium-dependent cell-adhesion protein. May be involved in the establishment and maintenance of specific neuronal connections in the brain. The chain is Protocadherin gamma-A11 (PCDHGA11) from Pan troglodytes (Chimpanzee).